The sequence spans 274 residues: Syntaxin-12 (274 aa).

Positions methionine 1–arginine 20 are disordered. Residue serine 2 is modified to N-acetylserine. The Cytoplasmic portion of the chain corresponds to serine 2–lysine 250. A coiled-coil region spans residues glutamine 34–leucine 80. A disordered region spans residues glutamate 128–glutamate 150. A phosphoserine mark is found at serine 139, serine 142, serine 218, and serine 225. In terms of domain architecture, t-SNARE coiled-coil homology spans leucine 178 to alanine 240. Residues methionine 251–valine 271 form a helical; Anchor for type IV membrane protein membrane-spanning segment. The Vesicular segment spans residues alanine 272 to lysine 274.

It belongs to the syntaxin family. In terms of assembly, associates with the BLOC-1 complex. Interacts with BLOC1S6. Interacts with NAPA and SNAP23. Identified in a complex containing STX6, STX12, VAMP4 and VTI1A. Interacts with GRIPAP1. Forms a complex with GRIP1, GRIA2 and NSG1; controls the intracellular fate of AMPAR and the endosomal sorting of the GRIA2 subunit toward recycling and membrane targeting. Interacts with NSG1. Interacts with TPC1. Interacts (via N-terminus) with VPS13B. In terms of tissue distribution, ubiquitous. Highly expressed in brain.

The protein resides in the endosome membrane. Its subcellular location is the golgi apparatus membrane. It localises to the endomembrane system. The protein localises to the early endosome membrane. It is found in the recycling endosome membrane. Its function is as follows. SNARE promoting fusion of transport vesicles with target membranes. Together with SNARE STX6, promotes movement of vesicles from endosomes to the cell membrane, and may therefore function in the endocytic recycling pathway. Through complex formation with GRIP1, GRIA2 and NSG1 controls the intracellular fate of AMPAR and the endosomal sorting of the GRIA2 subunit toward recycling and membrane targeting. This is Syntaxin-12 (Stx12) from Rattus norvegicus (Rat).